The sequence spans 200 residues: NADH-quinone oxidoreductase subunit C (200 aa).

This sequence belongs to the complex I 30 kDa subunit family. As to quaternary structure, NDH-1 is composed of 14 different subunits. Subunits NuoB, C, D, E, F, and G constitute the peripheral sector of the complex.

The protein resides in the cell inner membrane. It catalyses the reaction a quinone + NADH + 5 H(+)(in) = a quinol + NAD(+) + 4 H(+)(out). NDH-1 shuttles electrons from NADH, via FMN and iron-sulfur (Fe-S) centers, to quinones in the respiratory chain. The immediate electron acceptor for the enzyme in this species is believed to be ubiquinone. Couples the redox reaction to proton translocation (for every two electrons transferred, four hydrogen ions are translocated across the cytoplasmic membrane), and thus conserves the redox energy in a proton gradient. This is NADH-quinone oxidoreductase subunit C from Ralstonia pickettii (strain 12J).